The sequence spans 855 residues: Inactive rhomboid protein 1 (855 aa).

Residues 1-411 (MSEARRDSTS…HRPFFTYWLT (411 aa)) lie on the Cytoplasmic side of the membrane. Phosphoserine is present on residues Ser-76 and Ser-176. Phosphothreonine occurs at positions 180 and 183. Ser-390 is subject to Phosphoserine. Residues 412–432 (FVHSLVTILAVCIYGIAPVGF) form a helical membrane-spanning segment. Topologically, residues 433 to 655 (SQHETVDSVL…NPEVPDQFYR (223 aa)) are lumenal. N-linked (GlcNAc...) asparagine glycosylation is present at Asn-583. The helical transmembrane segment at 656 to 676 (LWLSLFLHAGILHCLVSICFQ) threads the bilayer. Topologically, residues 677-691 (MTVLRDLEKLAGWHR) are cytoplasmic. Residues 692-712 (IAIIYLLSGVTGNLASAIFLP) traverse the membrane as a helical segment. Topologically, residues 713-714 (YR) are lumenal. Residues 715–735 (AEVGPAGSQFGILACLFVELF) form a helical membrane-spanning segment. Residues 736–746 (QSWQILARPWR) lie on the Cytoplasmic side of the membrane. Residues 747–767 (AFFKLLAVVLFLFTFGLLPWI) form a helical membrane-spanning segment. At 768–772 (DNFAH) the chain is on the lumenal side. A helical membrane pass occupies residues 773–793 (ISGFISGLFLSFAFLPYISFG). Residues 794–803 (KFDLYRKRCQ) are Cytoplasmic-facing. A helical membrane pass occupies residues 804-824 (IIIFQVVFLGLLAGLVVLFYV). Topologically, residues 825-855 (YPVRCEWCEFLTCIPFTDKFCEKYELDAQLH) are lumenal.

The protein belongs to the peptidase S54 family. In terms of assembly, homodimer, or homooligomer. Interacts with TGFA and HBEGF. Interacts with EGF; may retain EGF in the endoplasmic reticulum and regulates its degradation through the endoplasmic reticulum-associated degradation (ERAD). Interacts (via cytoplasmic N-terminus) with FRMD8/iTAP; this interaction leads to mutual protein stabilization. Interacts with ADAM17/TACE. In terms of processing, N-glycosylated. As to expression, highly expressed in cerebellum, cerebrum, heart, skeletal muscle, placenta, pancreatic islet and testis. Detected at lower levels in colon, kidney, small intestine and lung.

The protein localises to the endoplasmic reticulum membrane. It is found in the golgi apparatus membrane. In terms of biological role, regulates ADAM17 protease, a sheddase of the epidermal growth factor (EGF) receptor ligands and TNF, thereby plays a role in sleep, cell survival, proliferation, migration and inflammation. Does not exhibit any protease activity on its own. The protein is Inactive rhomboid protein 1 (RHBDF1) of Homo sapiens (Human).